Here is a 639-residue protein sequence, read N- to C-terminus: Chaperone protein DnaK (639 aa).

The residue at position 198 (Thr198) is a Phosphothreonine; by autocatalysis. The interval 602–639 (QAKSQAQGGDNADAGKQANATADDVVDAEFEEVKDDKK) is disordered. The segment covering 625–639 (DVVDAEFEEVKDDKK) has biased composition (acidic residues).

The protein belongs to the heat shock protein 70 family.

Its function is as follows. Acts as a chaperone. In Shewanella baltica (strain OS195), this protein is Chaperone protein DnaK.